The following is a 343-amino-acid chain: Dihydroorotase (343 aa).

Zn(2+) contacts are provided by H14 and H16. Substrate contacts are provided by residues 16 to 18 (HLR) and N42. Positions 100, 137, and 175 each coordinate Zn(2+). N6-carboxylysine is present on K100. H137 is a substrate binding site. L220 lines the substrate pocket. Residue D248 participates in Zn(2+) binding. Residue D248 is part of the active site. Positions 252 and 264 each coordinate substrate.

Belongs to the metallo-dependent hydrolases superfamily. DHOase family. Class II DHOase subfamily. Homodimer. Zn(2+) is required as a cofactor.

It catalyses the reaction (S)-dihydroorotate + H2O = N-carbamoyl-L-aspartate + H(+). Its pathway is pyrimidine metabolism; UMP biosynthesis via de novo pathway; (S)-dihydroorotate from bicarbonate: step 3/3. In terms of biological role, catalyzes the reversible cyclization of carbamoyl aspartate to dihydroorotate. The protein is Dihydroorotase of Synechococcus sp. (strain CC9902).